A 120-amino-acid chain; its full sequence is NADH-quinone oxidoreductase subunit A (120 aa).

3 consecutive transmembrane segments (helical) span residues 10-30, 65-85, and 89-109; these read ILVF…MGWF, VAIL…WAVV, and IGWF…VGFI.

Belongs to the complex I subunit 3 family. As to quaternary structure, NDH-1 is composed of 14 different subunits. Subunits NuoA, H, J, K, L, M, N constitute the membrane sector of the complex.

It localises to the cell inner membrane. The enzyme catalyses a quinone + NADH + 5 H(+)(in) = a quinol + NAD(+) + 4 H(+)(out). Its function is as follows. NDH-1 shuttles electrons from NADH, via FMN and iron-sulfur (Fe-S) centers, to quinones in the respiratory chain. The immediate electron acceptor for the enzyme in this species is believed to be ubiquinone. Couples the redox reaction to proton translocation (for every two electrons transferred, four hydrogen ions are translocated across the cytoplasmic membrane), and thus conserves the redox energy in a proton gradient. This chain is NADH-quinone oxidoreductase subunit A, found in Coxiella burnetii (strain Dugway 5J108-111).